Consider the following 135-residue polypeptide: Small ribosomal subunit protein bS16 (135 aa).

Belongs to the bacterial ribosomal protein bS16 family.

In Prosthecochloris aestuarii (strain DSM 271 / SK 413), this protein is Small ribosomal subunit protein bS16.